The chain runs to 783 residues: uncharacterized protein (783 aa).

Residues 1-22 (MVNTRGYTTLPNVEEPANNSQD) are disordered. The Cytoplasmic portion of the chain corresponds to 1 to 109 (MVNTRGYTTL…SKIGNVMVMR (109 aa)). A helical; Signal-anchor for type II membrane protein membrane pass occupies residues 110 to 127 (RIFYIMMMSIIAALIIAS). Residues 128–783 (DRLPNGKARG…NLHGINTNEF (656 aa)) lie on the Extracellular side of the membrane. Residues N139 and N213 are each glycosylated (N-linked (GlcNAc...) asparagine). Residues 241 to 333 (HNGQLNNIPV…GTGDALTPEW (93 aa)) enclose the PA domain. Residue N529 is glycosylated (N-linked (GlcNAc...) asparagine).

The protein resides in the cell membrane. This is an uncharacterized protein from Saccharomyces cerevisiae (strain ATCC 204508 / S288c) (Baker's yeast).